The following is a 426-amino-acid chain: Synaptotagmin-13 (426 aa).

At 1-6 (MVLSVP) the chain is on the vesicular side. Residues 7 to 29 (VIALGATLGTATSILALCGVTCL) traverse the membrane as a helical segment. The Cytoplasmic segment spans residues 30 to 426 (CRHMHPKKGL…QIAMWHQLHL (397 aa)). 2 C2 domains span residues 158-275 (QAPK…AQWG) and 287-422 (GAGE…AMWH).

Belongs to the synaptotagmin family. Interacts with NRXN1. In terms of tissue distribution, expressed in brain, heart, spleen, lung and testis.

It is found in the cytoplasmic vesicle membrane. In terms of biological role, may be involved in transport vesicle docking to the plasma membrane. This is Synaptotagmin-13 (Syt13) from Mus musculus (Mouse).